The chain runs to 246 residues: Exosome complex component Rrp41 (246 aa).

This sequence belongs to the RNase PH family. Rrp41 subfamily. As to quaternary structure, component of the archaeal exosome complex. Forms a hexameric ring-like arrangement composed of 3 Rrp41-Rrp42 heterodimers. The hexameric ring associates with a trimer of Rrp4 and/or Csl4 subunits.

It localises to the cytoplasm. Its function is as follows. Catalytic component of the exosome, which is a complex involved in RNA degradation. Has 3'-&gt;5' exoribonuclease activity. Can also synthesize heteromeric RNA-tails. In Pyrobaculum islandicum (strain DSM 4184 / JCM 9189 / GEO3), this protein is Exosome complex component Rrp41.